We begin with the raw amino-acid sequence, 317 residues long: MTGRAFAIPLRTRFRGITVREGMLVRGAAGWGEFSPFAEYGPRECARWWAACYEAAELGWPAPVRDTVPVNATVPAVGPEEAARIVASSGCTTAKVKVAERGQSEANDVARVEAVRDALGPRGRVRIDVNGAWDVDTAVRMIRLLDRFELEYVEQPCATVDELAEVRRRVSVPIAADESIRRAEDPLRVRDAEAADVVVLKVQPLGGVRAALRLAEECGLPVVVSSAVETSVGLAAGVALAAALPELPYACGLATLRLLHADVCDDPLLPVHGVLPVRRVDVSEQRLAEVEIDPAAWQARLAAARAAWEQVEREPGP.

2-succinylbenzoate is bound by residues 71–73 (NAT) and Lys-95. Residue Lys-97 is the Proton donor of the active site. Mg(2+) contacts are provided by Asp-128, Glu-154, and Asp-177. 2-succinylbenzoate is bound at residue 128–130 (DVN). Residue Lys-201 coordinates 2-succinylbenzoate. Catalysis depends on Lys-201, which acts as the Proton acceptor.

It belongs to the mandelate racemase/muconate lactonizing enzyme family. MenC type 1 subfamily. Monomer. A divalent metal cation serves as cofactor.

It carries out the reaction (1R,6R)-6-hydroxy-2-succinyl-cyclohexa-2,4-diene-1-carboxylate = 2-succinylbenzoate + H2O. It functions in the pathway quinol/quinone metabolism; 1,4-dihydroxy-2-naphthoate biosynthesis; 1,4-dihydroxy-2-naphthoate from chorismate: step 4/7. Its pathway is quinol/quinone metabolism; menaquinone biosynthesis. In terms of biological role, converts 2-succinyl-6-hydroxy-2,4-cyclohexadiene-1-carboxylate (SHCHC) to 2-succinylbenzoate (OSB). Does not show N-succinylamino acid racemase (NSAR) activity with N-succinyl-L-phenylglycine as substrate. This chain is o-succinylbenzoate synthase, found in Thermobifida fusca (strain YX).